The chain runs to 1258 residues: MDAPEEPQPPVVYTMENKPIVTCAGDQNLFTSIYPTLSQQLPREPMEWRRSYGRAPKMIHLESNFVQFKEELLPKEGNKALLTFPFLHIYWTECCDTEVYKATVKDDLTKWQNVLKAHSSVDWLIVVVENDAKKKNKTNILPRTSIVDKIRNDFCNKQSDRCVVLSDPLKDSSRTQESWNAFLTKLRTLLLMSFTKNLGKFEDDMRTLREKRTEPGWSFCEYFMVQEELAFVFEMLQQFEDALVQYDELDALFSQYVVNFGAGDGANWLTFFCQPVKSWNGLVLRKPIDMEKRELIQKQEATLLDLRSYLFSRQCTLLLFLQRPWEVAQRALELLHSCVQELKLLEVSVPPGALDCWVFLSCLEVLQRIEGCCDRAQIDSNIAHMVGLWSYAMEKLKSLGYLCGLVSEKGPNSEDLNRTVDLLAGLGAERPETANTAQSPYKKLQEALSSVEAFEKHYLDLSHATIEMYTSIGRIRSAKLVGKDLAEFYMRKRSPQKAEMYLQGALKNYLAEGWALPVTHTRKQLAECQKHLGQMENYLQTSSLLASDHHLTEEERKYFCQEILSFASQQEDNPGHKVVLPMQFARLKDLHFDPPNAVVHAGGVLTVEITVCSQMPIPVHVDQIAVNVHFSIEKNNYRKTAEWLTKHKTSNGIITFPAEASLFPASQNSLPALELSEMLERSPSDNSLNTTGIICRNVHMLLRRQESGSSLEPPSGLALEDGAHVLRCSSVTLQPGANKIAFKTQAKEPGTYTLRQLRASVGPVWFVLAHIHPIVQYDVYSQEPQLHVEPLADSLLAGIPQKVKFTVTTGHYTVKNGDSLQLSNVEAMLILCQAENRAVVYSNSREECSTALLRIQSSDKVTSIGLPTAPAYHVIEFELEVLSLPSAPASGGDTSVPGTPELHRKQKDSQRAGHCMVTTDHKVSIDCPWSIYSTVIALTFSVPFRTEHSLLSAGTRKYVQVCVQNLSELDFELSDSNLEDKGHATDLRLAPLNTQSQQLIHSKQSVFFVWELTWTQEPPPPLHCQFSVGFSPASEEQLTVSLKPYTYEFQVENFFTLYSVRAEILPASGAEYCKTGSLCSLEVSITRLADLLDVDKDEALVESEDYFSTKLMYEVVDNSSNWAVCGKSCGVIAMPLAAQATHRVHMEVMPLFAGYLPLPDVRLFKYLPHHSAHASQLDADSWIENDSLSVDKHLDDQLDCSSLRSRGSTHSTSSSEHKGLPMPRLQALPAGQVFNSSTGMQVLVIPSQDDHVLEVSVT.

Ser-707 carries the phosphoserine modification. Disordered regions lie at residues 888–913 (PASG…QRAG) and 1201–1222 (SSLR…GLPM). Residues 901 to 911 (ELHRKQKDSQR) are compositionally biased toward basic and acidic residues. A compositionally biased stretch (low complexity) spans 1201 to 1214 (SSLRSRGSTHSTSS).

It belongs to the TRAPPC10 family. As to quaternary structure, specific component of the multisubunit TRAPP II complex, which includes at least TRAPPC1, TRAPPC2, TRAPPC3, TRAPPC4, TRAPPC5, TRAPPC6A/B, TRAPPC9, TRAPPC10 and TRAPPC14. TRAPPC9, TRAPPC10 and TRAPPC14 are specific subunits of the TRAPP II complex. Interacts with TRAPPC14.

It localises to the golgi apparatus. It is found in the cis-Golgi network. Functionally, specific subunit of the TRAPP (transport protein particle) II complex, a highly conserved vesicle tethering complex that functions in late Golgi trafficking as a membrane tether. This Mus musculus (Mouse) protein is Trafficking protein particle complex subunit 10 (Trappc10).